Here is a 284-residue protein sequence, read N- to C-terminus: UPF0276 protein PA3283 (284 aa).

It belongs to the UPF0276 family.

In Pseudomonas aeruginosa (strain ATCC 15692 / DSM 22644 / CIP 104116 / JCM 14847 / LMG 12228 / 1C / PRS 101 / PAO1), this protein is UPF0276 protein PA3283.